Reading from the N-terminus, the 466-residue chain is Asparagine--tRNA ligase (466 aa).

The protein belongs to the class-II aminoacyl-tRNA synthetase family. In terms of assembly, homodimer.

It is found in the cytoplasm. It catalyses the reaction tRNA(Asn) + L-asparagine + ATP = L-asparaginyl-tRNA(Asn) + AMP + diphosphate + H(+). This is Asparagine--tRNA ligase from Shewanella putrefaciens (strain CN-32 / ATCC BAA-453).